Consider the following 415-residue polypeptide: Peptide chain release factor subunit 1-2 (415 aa).

Belongs to the eukaryotic release factor 1 family. Heterodimer of two subunits, one of which binds GTP.

Its subcellular location is the cytoplasm. In terms of biological role, directs the termination of nascent peptide synthesis (translation) in response to the termination codons UAA, UAG and UGA. The sequence is that of Peptide chain release factor subunit 1-2 from Methanosarcina acetivorans (strain ATCC 35395 / DSM 2834 / JCM 12185 / C2A).